The chain runs to 331 residues: Glucokinase (331 aa).

16 to 21 is an ATP binding site; that stretch reads GDIGGT.

Belongs to the bacterial glucokinase family.

It localises to the cytoplasm. The enzyme catalyses D-glucose + ATP = D-glucose 6-phosphate + ADP + H(+). This chain is Glucokinase, found in Pseudomonas aeruginosa (strain UCBPP-PA14).